We begin with the raw amino-acid sequence, 235 residues long: Glucosamine-6-phosphate deaminase (235 aa).

The active-site Proton acceptor; for enolization step is the D62. N128 (for ring-opening step) is an active-site residue. The active-site Proton acceptor; for ring-opening step is H130. E135 (for ring-opening step) is an active-site residue.

The protein belongs to the glucosamine/galactosamine-6-phosphate isomerase family. NagB subfamily.

The catalysed reaction is alpha-D-glucosamine 6-phosphate + H2O = beta-D-fructose 6-phosphate + NH4(+). It functions in the pathway amino-sugar metabolism; N-acetylneuraminate degradation; D-fructose 6-phosphate from N-acetylneuraminate: step 5/5. Catalyzes the reversible isomerization-deamination of glucosamine 6-phosphate (GlcN6P) to form fructose 6-phosphate (Fru6P) and ammonium ion. The chain is Glucosamine-6-phosphate deaminase from Streptococcus gordonii (strain Challis / ATCC 35105 / BCRC 15272 / CH1 / DL1 / V288).